We begin with the raw amino-acid sequence, 142 residues long: Large ribosomal subunit protein uL11 (142 aa).

The protein belongs to the universal ribosomal protein uL11 family. Part of the ribosomal stalk of the 50S ribosomal subunit. Interacts with L10 and the large rRNA to form the base of the stalk. L10 forms an elongated spine to which L12 dimers bind in a sequential fashion forming a multimeric L10(L12)X complex. Post-translationally, one or more lysine residues are methylated.

Functionally, forms part of the ribosomal stalk which helps the ribosome interact with GTP-bound translation factors. This Brucella anthropi (strain ATCC 49188 / DSM 6882 / CCUG 24695 / JCM 21032 / LMG 3331 / NBRC 15819 / NCTC 12168 / Alc 37) (Ochrobactrum anthropi) protein is Large ribosomal subunit protein uL11.